The primary structure comprises 121 residues: Large ribosomal subunit protein bL20 (121 aa).

This sequence belongs to the bacterial ribosomal protein bL20 family.

Binds directly to 23S ribosomal RNA and is necessary for the in vitro assembly process of the 50S ribosomal subunit. It is not involved in the protein synthesizing functions of that subunit. The protein is Large ribosomal subunit protein bL20 of Chlamydia felis (strain Fe/C-56) (Chlamydophila felis).